Reading from the N-terminus, the 586-residue chain is Solute carrier family 13 member 2 (586 aa).

3 helical membrane passes run 13–33 (SYLIVLCLPIFLLPLPLIVQT), 53–73 (ALPLAVTALFPIILFPLMGIM), and 86–106 (TNILFVGGLMVAIAVEHWNLH). The span at 165–175 (DVEEGNSNPSF) shows a compositional bias: polar residues. Residues 165–209 (DVEEGNSNPSFELQEASPQKEETKLDNGQAVSVSSEPRAQKTKEH) form a disordered region. A run of 9 helical transmembrane segments spans residues 215–235 (GLSLCICYSASIGGIATLTGT), 264–284 (FAFPTMVILLLLAWLWLQVLF), 319–339 (PMSFAEKAVTFLFVLLVVLWF), 366–386 (GTVAIFISLIMFIIPSKIPGL), 407–427 (TVNDKMPWNILILLGGGFALA), 445–465 (PLQHVPPSATVLILSLLVAIF), 478–498 (FLPILASMAQAICLHPLYVML), 506–526 (LAFMLPVATPPNAIVFSFGGL), and 535–555 (GFLLNIIGVLTITLSINSWSI).

Belongs to the SLC13A/DASS transporter (TC 2.A.47) family. NADC subfamily. As to expression, highly expressed in kidney and small intestine. Not detectable in brain, heart, stomach and skeletal muscle.

The protein resides in the apical cell membrane. It carries out the reaction succinate(out) + 3 Na(+)(out) = succinate(in) + 3 Na(+)(in). The enzyme catalyses fumarate(out) + 3 Na(+)(out) = fumarate(in) + 3 Na(+)(in). The catalysed reaction is 2-oxoglutarate(out) + 3 Na(+)(out) = 2-oxoglutarate(in) + 3 Na(+)(in). Its activity is regulated as follows. Li(+) decreases succinate transport in the presence of Na(+), by competing at one of the three cation binding sites. Functionally, low-affinity sodium-dicarboxylate cotransporter, that mediates the entry of citric acid cycle intermediates, such as succinate, citrate, fumarate and alpha-ketoglutarate (2-oxoglutarate) into the small intestine and renal proximal tubule. Can transport citrate in a Na(+)-dependent manner, recognizing the divalent form of citrate rather than the trivalent form which is normally found in blood. Transports the dicarboxylate into the cell with a probable stoichiometry of 3 Na(+) for 1 divalent dicarboxylate, rendering the process electrogenic. Has a critical role in renal dicarboxylate transport. This is Solute carrier family 13 member 2 (Slc13a2) from Mus musculus (Mouse).